The following is a 638-amino-acid chain: Gamma-aminobutyric acid receptor subunit theta (638 aa).

Positions 1-21 (MGIRGMLRAAALLLLIRTWLA) are cleaved as a signal peptide. At 22-267 (ESNGPSPTPK…FQVQREVRSY (246 aa)) the chain is on the extracellular side. A glycan (N-linked (GlcNAc...) asparagine) is linked at N127. C183 and C197 form a disulfide bridge. A helical membrane pass occupies residues 268-288 (LVQVYWPTVLTTILSWISFWM). Residues 289-296 (NYDSSAAR) are Cytoplasmic-facing. Residues 297-314 (VTIGLTSILVLTTIDSHM) form a helical membrane-spanning segment. The Extracellular portion of the chain corresponds to 315-325 (RDKLPHISCIK). The chain crosses the membrane as a helical span at residues 326–346 (AIDIYILVCLFFVFLSLLEYV). Over 347–617 (YINYLFFSQV…NRVPKVDRWS (271 aa)) the chain is Cytoplasmic. The tract at residues 491–515 (ACDDEDSEESLSSEESHGHGSSHTG) is disordered. The span at 492 to 502 (CDDEDSEESLS) shows a compositional bias: acidic residues. A helical transmembrane segment spans residues 618-638 (RFLFPLSFGLFNVVYWLYHVY).

Belongs to the ligand-gated ion channel (TC 1.A.9) family. Gamma-aminobutyric acid receptor (TC 1.A.9.5) subfamily. GABRQ sub-subfamily. In terms of assembly, heteropentamer, formed by a combination of alpha (GABRA1-6), beta (GABRB1-3), gamma (GABRG1-3), delta (GABRD), epsilon (GABRE), rho (GABRR1-3), pi (GABRP) and theta (GABRQ) chains, each subunit exhibiting distinct physiological and pharmacological properties. Expressed in brain, lung, and spleen.

The protein localises to the postsynaptic cell membrane. It localises to the cell membrane. It catalyses the reaction chloride(in) = chloride(out). With respect to regulation, potentiated by etomidate, propofol, pregnanolone and pentobarbital. In terms of biological role, theta subunit of the heteropentameric ligand-gated chloride channel gated by gamma-aminobutyric acid (GABA), a major inhibitory neurotransmitter in the brain. GABA-gated chloride channels, also named GABA(A) receptors (GABAAR), consist of five subunits arranged around a central pore and contain GABA active binding site(s) located at the alpha and beta subunit interfaces. When activated by GABA, GABAARs selectively allow the flow of chloride anions across the cell membrane down their electrochemical gradient. The chain is Gamma-aminobutyric acid receptor subunit theta from Mus musculus (Mouse).